Reading from the N-terminus, the 367-residue chain is Pectate lyase 1 (367 aa).

An N-terminal signal peptide occupies residues 1-21; the sequence is MASPCLIAVLVFLCAIVSCYS. Cysteine 28 and cysteine 45 are disulfide-bonded. A beta-helix region spans residues 38-305; that stretch reads NRMKLADCAV…YKKEVTKRIG (268 aa). Residues 92-104 form an igE-binding. Binds to IgE in 5 out of 7 patients tested region; sequence IFSQNMNIKLKMP. A disulfide bridge links cysteine 128 with cysteine 147. Residue asparagine 148 is glycosylated (N-linked (GlcNAc...) asparagine). Aspartate 170 serves as a coordination point for Ca(2+). Residue asparagine 178 is glycosylated (N-linked (GlcNAc...) asparagine). Ca(2+)-binding residues include aspartate 194 and aspartate 198. Positions 239–250 are igE-binding. Binds to IgE in 6 out of 7 patients tested; sequence AFNQFGPNAGQR. Arginine 250 is an active-site residue. An igE-binding. Binds to IgE in 5 out of 7 patients tested region spans residues 251 to 258; it reads MPRARYGL. A disulfide bond links cysteine 306 and cysteine 312. The tract at residues 317–327 is igE-binding. Binds to IgE in 3 out of 7 patients tested; it reads WRSTRDAFING.

This sequence belongs to the polysaccharide lyase 1 family. Amb a subfamily. The cofactor is Ca(2+). In terms of processing, N-glycosylated; consists of complex-type N-glycans containing the Lewis a antigen (Galbeta1-3(Fucalpha1-4)GlcNAcbeta1-). Expressed in pollen (at protein level).

It carries out the reaction Eliminative cleavage of (1-&gt;4)-alpha-D-galacturonan to give oligosaccharides with 4-deoxy-alpha-D-galact-4-enuronosyl groups at their non-reducing ends.. It functions in the pathway glycan metabolism; pectin degradation; 2-dehydro-3-deoxy-D-gluconate from pectin: step 2/5. Its function is as follows. Has low pectate lyase activity. This chain is Pectate lyase 1, found in Juniperus ashei (Ozark white cedar).